The sequence spans 60 residues: uncharacterized protein (60 aa).

The helical transmembrane segment at 33–55 (FRLLRGIFLITLVIWTVVWLKLL) threads the bilayer.

The protein belongs to the HHV-5 UL2 protein family.

The protein resides in the host membrane. This is an uncharacterized protein from Human cytomegalovirus (strain AD169) (HHV-5).